The chain runs to 404 residues: MDLQKPPNFMLDCGMAPHMMPPINWAAAAIAVASSTSGATNATSSNSVATSQQLQHHPYGTAAGGYKHAQQAIPKSVTPYSDATNCKKSSNHIKRPMNAFMVWSQMERRKICEHQPDMHNAEISKQLGSRWRSLTDEEKAPFVAEAERLRVCHMQEYPDYKYKPRKKPKKNPDGTLQQPAQPQAPQQQQAPPRGASPQARQRKRPNTDQQSETQQFQNFKSVKVEQDWMGNAHMSHAQKMPFHPSYPSPSEFGHAPLTPESGFYDDYFTQQHHQQHFASQHHNSAGSPLRMTNLGMDMGMPPQMMGHNSGFGAGNHPFYLHTSPPSVDQDDMRSLSSGSSGYADCSASEQSTSSPNSAGVVTMATAATTTTHLDDLEQICPTVTTGELVNYPWSDALGIDINFS.

A DNA-binding region (HMG box) is located at residues 93 to 161 (IKRPMNAFMV…CHMQEYPDYK (69 aa)). Disordered stretches follow at residues 158-218 (PDYK…QFQN) and 321-359 (HTSPPSVDQDDMRSLSSGSSGYADCSASEQSTSSPNSAG). Positions 177–199 (QQPAQPQAPQQQQAPPRGASPQA) are enriched in low complexity. Composition is skewed to polar residues over residues 207-218 (TDQQSETQQFQN) and 347-359 (ASEQSTSSPNSAG).

The protein localises to the nucleus. Functionally, probable transcription factor required for embryogenesis, vulval development and cell fate specification of the postembryonic mesoderm (also known as the M lineage). Specifically, required for the specification of sex myoblast cells and their development into the muscles that are necessary for egg-laying. In addition, may be involved in RME GABAergic motor neuron progenitor cell fate specification. This Caenorhabditis elegans protein is Transcription factor sem-2.